The sequence spans 202 residues: NADH-quinone oxidoreductase subunit C (202 aa).

This sequence belongs to the complex I 30 kDa subunit family. NDH-1 is composed of 14 different subunits. Subunits NuoB, C, D, E, F, and G constitute the peripheral sector of the complex.

It is found in the cell inner membrane. It catalyses the reaction a quinone + NADH + 5 H(+)(in) = a quinol + NAD(+) + 4 H(+)(out). Its function is as follows. NDH-1 shuttles electrons from NADH, via FMN and iron-sulfur (Fe-S) centers, to quinones in the respiratory chain. The immediate electron acceptor for the enzyme in this species is believed to be ubiquinone. Couples the redox reaction to proton translocation (for every two electrons transferred, four hydrogen ions are translocated across the cytoplasmic membrane), and thus conserves the redox energy in a proton gradient. The polypeptide is NADH-quinone oxidoreductase subunit C (Bartonella henselae (strain ATCC 49882 / DSM 28221 / CCUG 30454 / Houston 1) (Rochalimaea henselae)).